Consider the following 589-residue polypeptide: Class I diterpene synthase 2, chloroplastic (589 aa).

Mg(2+) contacts are provided by Asp-328, Asp-332, Asn-472, Thr-476, and Glu-480. Positions 328–332 (DDFFD) match the DDXXD motif motif.

It belongs to the terpene synthase family. Mg(2+) serves as cofactor. Mostly expressed in trichomes of leaves and fruits.

It localises to the plastid. The protein resides in the chloroplast. It catalyses the reaction 9alpha-copalyl diphosphate + H2O = (13S)-vitexifolin A + diphosphate. The catalysed reaction is peregrinol diphosphate = (13R)-9,13-epoxylabd-14-ene + diphosphate. It carries out the reaction peregrinol diphosphate + H2O = viteagnusin D + diphosphate. The protein operates within secondary metabolite biosynthesis; terpenoid biosynthesis. Functionally, involved in the biosynthesis of labdane-type diterpenoid including cleroda-dienols, and peregrinol lactones and furan derivatives, dopaminergic diterpenoids that can bind to dopamine receptors in the human pituitary gland, have probably ability to lower prolactin levels, and are used to treat menstrual cycle disorders (e.g. premenstrual syndrome and mastodynia). Terpene synthase the catalyzes the conversion of peregrinol diphosphate to viteagnusin D and 9,13(R)-epoxy-labd-14-ene, and of syn-copalyl diphosophate to vitexifolin A. This chain is Class I diterpene synthase 2, chloroplastic, found in Vitex agnus-castus (Chaste tree).